Here is a 375-residue protein sequence, read N- to C-terminus: 3-dehydroquinate synthase (375 aa).

NAD(+) contacts are provided by residues 82–87 (SGETSK), 116–120 (GVVGD), 140–141 (TT), K153, and K162. Residues E195, H259, and H276 each contribute to the Zn(2+) site.

It belongs to the sugar phosphate cyclases superfamily. Dehydroquinate synthase family. NAD(+) serves as cofactor. It depends on Co(2+) as a cofactor. Requires Zn(2+) as cofactor.

Its subcellular location is the cytoplasm. The catalysed reaction is 7-phospho-2-dehydro-3-deoxy-D-arabino-heptonate = 3-dehydroquinate + phosphate. It participates in metabolic intermediate biosynthesis; chorismate biosynthesis; chorismate from D-erythrose 4-phosphate and phosphoenolpyruvate: step 2/7. Functionally, catalyzes the conversion of 3-deoxy-D-arabino-heptulosonate 7-phosphate (DAHP) to dehydroquinate (DHQ). This is 3-dehydroquinate synthase from Rhodopirellula baltica (strain DSM 10527 / NCIMB 13988 / SH1).